Consider the following 374-residue polypeptide: Chaperone protein DnaJ (374 aa).

A J domain is found at 4-69 (SYYEILEITQ…EKRAIYDRYG (66 aa)). The CR-type zinc-finger motif lies at 136–213 (GCKKNIDFTY…CKGLGYNESK (78 aa)). Zn(2+)-binding residues include cysteine 149, cysteine 152, cysteine 165, cysteine 168, cysteine 187, cysteine 190, cysteine 201, and cysteine 204. CXXCXGXG motif repeat units lie at residues 149 to 156 (CKTCNGTG), 165 to 172 (CPKCQGRG), 187 to 194 (CPDCQGSG), and 201 to 208 (CSDCKGLG).

This sequence belongs to the DnaJ family. As to quaternary structure, homodimer. Zn(2+) serves as cofactor.

Its subcellular location is the cytoplasm. Participates actively in the response to hyperosmotic and heat shock by preventing the aggregation of stress-denatured proteins and by disaggregating proteins, also in an autonomous, DnaK-independent fashion. Unfolded proteins bind initially to DnaJ; upon interaction with the DnaJ-bound protein, DnaK hydrolyzes its bound ATP, resulting in the formation of a stable complex. GrpE releases ADP from DnaK; ATP binding to DnaK triggers the release of the substrate protein, thus completing the reaction cycle. Several rounds of ATP-dependent interactions between DnaJ, DnaK and GrpE are required for fully efficient folding. Also involved, together with DnaK and GrpE, in the DNA replication of plasmids through activation of initiation proteins. This is Chaperone protein DnaJ from Campylobacter jejuni subsp. jejuni serotype O:6 (strain 81116 / NCTC 11828).